The chain runs to 82 residues: ATP synthase subunit c, chloroplastic (82 aa).

Helical transmembrane passes span 4-24 (IISA…AIGP) and 57-77 (LAFM…LLFA).

This sequence belongs to the ATPase C chain family. As to quaternary structure, F-type ATPases have 2 components, F(1) - the catalytic core - and F(0) - the membrane proton channel. F(1) has five subunits: alpha(3), beta(3), gamma(1), delta(1), epsilon(1). F(0) has four main subunits: a(1), b(1), b'(1) and c(10-14). The alpha and beta chains form an alternating ring which encloses part of the gamma chain. F(1) is attached to F(0) by a central stalk formed by the gamma and epsilon chains, while a peripheral stalk is formed by the delta, b and b' chains.

The protein resides in the plastid. The protein localises to the chloroplast thylakoid membrane. F(1)F(0) ATP synthase produces ATP from ADP in the presence of a proton or sodium gradient. F-type ATPases consist of two structural domains, F(1) containing the extramembraneous catalytic core and F(0) containing the membrane proton channel, linked together by a central stalk and a peripheral stalk. During catalysis, ATP synthesis in the catalytic domain of F(1) is coupled via a rotary mechanism of the central stalk subunits to proton translocation. In terms of biological role, key component of the F(0) channel; it plays a direct role in translocation across the membrane. A homomeric c-ring of between 10-14 subunits forms the central stalk rotor element with the F(1) delta and epsilon subunits. The protein is ATP synthase subunit c, chloroplastic of Antithamnion sp. (Red alga).